The following is an 89-amino-acid chain: Small ribosomal subunit protein uS15 (89 aa).

The protein belongs to the universal ribosomal protein uS15 family. As to quaternary structure, part of the 30S ribosomal subunit. Forms a bridge to the 50S subunit in the 70S ribosome, contacting the 23S rRNA.

In terms of biological role, one of the primary rRNA binding proteins, it binds directly to 16S rRNA where it helps nucleate assembly of the platform of the 30S subunit by binding and bridging several RNA helices of the 16S rRNA. Functionally, forms an intersubunit bridge (bridge B4) with the 23S rRNA of the 50S subunit in the ribosome. This chain is Small ribosomal subunit protein uS15, found in Oceanobacillus iheyensis (strain DSM 14371 / CIP 107618 / JCM 11309 / KCTC 3954 / HTE831).